A 482-amino-acid polypeptide reads, in one-letter code: Methylenetetrahydrofolate--tRNA-(uracil-5-)-methyltransferase TrmFO (482 aa).

20-25 (GGGLAG) provides a ligand contact to FAD.

It belongs to the MnmG family. TrmFO subfamily. The cofactor is FAD.

The protein resides in the cytoplasm. The catalysed reaction is uridine(54) in tRNA + (6R)-5,10-methylene-5,6,7,8-tetrahydrofolate + NADH + H(+) = 5-methyluridine(54) in tRNA + (6S)-5,6,7,8-tetrahydrofolate + NAD(+). The enzyme catalyses uridine(54) in tRNA + (6R)-5,10-methylene-5,6,7,8-tetrahydrofolate + NADPH + H(+) = 5-methyluridine(54) in tRNA + (6S)-5,6,7,8-tetrahydrofolate + NADP(+). Functionally, catalyzes the folate-dependent formation of 5-methyl-uridine at position 54 (M-5-U54) in all tRNAs. This chain is Methylenetetrahydrofolate--tRNA-(uracil-5-)-methyltransferase TrmFO, found in Rhodopseudomonas palustris (strain HaA2).